The primary structure comprises 183 residues: Potassium-transporting ATPase KdpC subunit (183 aa).

The helical transmembrane segment at 11–31 (LILLLAVVTGALYPLAVTGVA) threads the bilayer.

Belongs to the KdpC family. The system is composed of three essential subunits: KdpA, KdpB and KdpC.

The protein localises to the cell inner membrane. Part of the high-affinity ATP-driven potassium transport (or Kdp) system, which catalyzes the hydrolysis of ATP coupled with the electrogenic transport of potassium into the cytoplasm. This subunit acts as a catalytic chaperone that increases the ATP-binding affinity of the ATP-hydrolyzing subunit KdpB by the formation of a transient KdpB/KdpC/ATP ternary complex. The sequence is that of Potassium-transporting ATPase KdpC subunit from Pseudomonas putida (strain W619).